We begin with the raw amino-acid sequence, 27 residues long: Alpha-benincasin (27 aa).

Has weak antifungal activity toward C.comatus and P.piricola but not toward M.arachidicola. Inhibits cell-free translation in rabbit reticulocyte lysate system. This Benincasa hispida (Wax gourd) protein is Alpha-benincasin.